We begin with the raw amino-acid sequence, 166 residues long: MSNNDQKRDEGYIEKLVQVNRVAKTVKGGRIFTFTALTVVGDGKGRVGFGRGKSREVPAAIQKAMEAARRNMIQVDLNGTTLQYAMKSAHGASKVYMQPASEGTGIIAGGAMRAVLEVAGVQNVLAKCYGSTNPVNVVHATFKGLKAMQSPESIAAKRGKSVQEII.

Positions Y12–V75 constitute an S5 DRBM domain.

It belongs to the universal ribosomal protein uS5 family. As to quaternary structure, part of the 30S ribosomal subunit. Contacts proteins S4 and S8.

Its function is as follows. With S4 and S12 plays an important role in translational accuracy. Functionally, located at the back of the 30S subunit body where it stabilizes the conformation of the head with respect to the body. In Pseudomonas fluorescens (strain ATCC BAA-477 / NRRL B-23932 / Pf-5), this protein is Small ribosomal subunit protein uS5.